We begin with the raw amino-acid sequence, 373 residues long: 5-amino-6-(5-phospho-D-ribitylamino)uracil phosphatase, chloroplastic (373 aa).

The protein belongs to the HAD-like hydrolase superfamily. DOG/GPP family. As to quaternary structure, homodimer. It depends on Mg(2+) as a cofactor.

The protein localises to the plastid. It localises to the chloroplast. It catalyses the reaction 5-amino-6-(5-phospho-D-ribitylamino)uracil + H2O = 5-amino-6-(D-ribitylamino)uracil + phosphate. Catalyzes the dephosphorylation of 5-amino-6-(5-phospho-D-ribitylamino)uracil, also known as ARPP, but has no activity toward flavin mononucleotide (FMN). The polypeptide is 5-amino-6-(5-phospho-D-ribitylamino)uracil phosphatase, chloroplastic (Arabidopsis thaliana (Mouse-ear cress)).